The primary structure comprises 260 residues: Cell division protein DivIB (260 aa).

Topologically, residues 1–25 (MGAQDQNGKNHGGLFRDFQNRNVKK) are cytoplasmic. A helical transmembrane segment spans residues 26–46 (MWPLVMPITIILLVMIFMISS). At 47–260 (YSRVKKVTVS…STKTTSVQGY (214 aa)) the chain is on the extracellular side. In terms of domain architecture, POTRA spans 48-119 (SRVKKVTVSG…NQVKIKVEEY (72 aa)).

It belongs to the FtsQ/DivIB family. DivIB subfamily.

It localises to the cell membrane. Its function is as follows. Cell division protein that may be involved in stabilizing or promoting the assembly of the division complex. In Lentilactobacillus buchneri (strain NRRL B-30929) (Lactobacillus buchneri), this protein is Cell division protein DivIB.